The following is a 341-amino-acid chain: tRNA N6-adenosine threonylcarbamoyltransferase (341 aa).

Residues His111 and His115 each contribute to the Fe cation site. Substrate-binding positions include Leu134–Gly138, Asp167, Gly180, and Asn276. Asp304 contacts Fe cation.

The protein belongs to the KAE1 / TsaD family. The cofactor is Fe(2+).

Its subcellular location is the cytoplasm. The enzyme catalyses L-threonylcarbamoyladenylate + adenosine(37) in tRNA = N(6)-L-threonylcarbamoyladenosine(37) in tRNA + AMP + H(+). Its function is as follows. Required for the formation of a threonylcarbamoyl group on adenosine at position 37 (t(6)A37) in tRNAs that read codons beginning with adenine. Is involved in the transfer of the threonylcarbamoyl moiety of threonylcarbamoyl-AMP (TC-AMP) to the N6 group of A37, together with TsaE and TsaB. TsaD likely plays a direct catalytic role in this reaction. The polypeptide is tRNA N6-adenosine threonylcarbamoyltransferase (Pseudomonas aeruginosa (strain UCBPP-PA14)).